The primary structure comprises 798 residues: Phenylalanine--tRNA ligase beta subunit (798 aa).

The 109-residue stretch at 39–147 (AARLAGFTLA…PSGEVGERFI (109 aa)) folds into the tRNA-binding domain. A B5 domain is found at 404-475 (DHSRAYKLDA…RIASLTKLVG (72 aa)). Mg(2+)-binding residues include Asp453, Asp459, Glu462, and Glu463. The region spanning 704–797 (RDLQAVERDF…VAKATGGTLR (94 aa)) is the FDX-ACB domain.

This sequence belongs to the phenylalanyl-tRNA synthetase beta subunit family. Type 1 subfamily. In terms of assembly, tetramer of two alpha and two beta subunits. Mg(2+) serves as cofactor.

The protein localises to the cytoplasm. The enzyme catalyses tRNA(Phe) + L-phenylalanine + ATP = L-phenylalanyl-tRNA(Phe) + AMP + diphosphate + H(+). The polypeptide is Phenylalanine--tRNA ligase beta subunit (Ruegeria pomeroyi (strain ATCC 700808 / DSM 15171 / DSS-3) (Silicibacter pomeroyi)).